Reading from the N-terminus, the 1208-residue chain is DNA-directed RNA polymerase subunit beta (1208 aa).

Belongs to the RNA polymerase beta chain family. As to quaternary structure, the RNAP catalytic core consists of 2 alpha, 1 beta, 1 beta' and 1 omega subunit. When a sigma factor is associated with the core the holoenzyme is formed, which can initiate transcription.

It catalyses the reaction RNA(n) + a ribonucleoside 5'-triphosphate = RNA(n+1) + diphosphate. Functionally, DNA-dependent RNA polymerase catalyzes the transcription of DNA into RNA using the four ribonucleoside triphosphates as substrates. The chain is DNA-directed RNA polymerase subunit beta from Enterococcus faecium (Streptococcus faecium).